A 753-amino-acid polypeptide reads, in one-letter code: MTILNHTLGFPRVGLRRELKKAQESYWAGNSTREELLTVGRELRARHWDQQKQAGIDLLPVGDFAWYDHVLTTSLLLGNVPPRHQNKDGSVDIDTLFRIGRGRAPTGEPAAAAEMTKWFNTNYHYMVPEFVKGQQFKLTWTQLLEEVDEALALSHNVKPVLLGPVTYLWLGKVKGEQFDRLSLLNDILPVYQQVLAELAKRGIEWVQIDEPALVLELPQAWLDAYKPAYDALQGQVKLLLTTYFEGVTPNLDTITALPVQGLHVDLVHGKDDVVELHKRLPSDWLLSAGLINGRNVWRADLTEKYAQIKDIVGKRDLWVASSCSLLHSPIDLSVETRLDAEVKSWFAFALQKCHELALLRDALNSGDTAALAEWSAPIQARRHSTRVHNPAVEKRLAAITAQDSQRANVYEVRAEAQRARFKLPAWPTTTIGSFPQTTEIRTLRLDFKKGNLDANNYRTGIAEHIKQAIVEQERLGLDVLVHGEAERNDMVEYFGEHLDGFVFTQNGWVQSYGSRCVKPPIVIGDISRPAPITVEWAKYAQSLTDKPVKGMLTGPVTILCWSFPREDVSRETIAKQIALALRDEVADLEAAGIGIIQIDEPALREGLPLRRSDWDAYLQWGVEAFRINAAVAKDDTQIHTHMCYCEFNDIMDSIAALDADVITIETSRSDMELLESFEEFDYPNEIGPGVYDIHSPNVPSVEWIEALLKKAAKRIPAERLWVNPDCGLKTRGWPETRAALANMVQAAQNLRRG.

Residues 17–20 (RELK) and Lys117 contribute to the 5-methyltetrahydropteroyltri-L-glutamate site. L-homocysteine contacts are provided by residues 431–433 (IGS) and Glu484. L-methionine is bound by residues 431-433 (IGS) and Glu484. Residues 515 to 516 (RC) and Trp561 contribute to the 5-methyltetrahydropteroyltri-L-glutamate site. An L-homocysteine-binding site is contributed by Asp599. Position 599 (Asp599) interacts with L-methionine. Glu605 lines the 5-methyltetrahydropteroyltri-L-glutamate pocket. Zn(2+) contacts are provided by His641, Cys643, and Glu665. His694 (proton donor) is an active-site residue. Cys726 serves as a coordination point for Zn(2+).

The protein belongs to the vitamin-B12 independent methionine synthase family. Zn(2+) is required as a cofactor.

The catalysed reaction is 5-methyltetrahydropteroyltri-L-glutamate + L-homocysteine = tetrahydropteroyltri-L-glutamate + L-methionine. It participates in amino-acid biosynthesis; L-methionine biosynthesis via de novo pathway; L-methionine from L-homocysteine (MetE route): step 1/1. Catalyzes the transfer of a methyl group from 5-methyltetrahydrofolate to homocysteine resulting in methionine formation. The polypeptide is 5-methyltetrahydropteroyltriglutamate--homocysteine methyltransferase (Shigella flexneri serotype 5b (strain 8401)).